Consider the following 104-residue polypeptide: MVRLGQVMYLHKDAYEEYAKRHAELWPEMKTALKKYGATNYSIFLNKLTGQTFAYLEVPDEATYNEIAETDICKKWWKYMEPLMDTNEDNSPVTTDLQEVFHLD.

Y18 is a substrate binding site. H22 functions as the Proton donor in the catalytic mechanism. Residues Y41 and 76–77 (WW) each bind substrate.

This sequence belongs to the rhamnose mutarotase family. As to quaternary structure, homodimer.

It is found in the cytoplasm. It carries out the reaction alpha-L-rhamnose = beta-L-rhamnose. The protein operates within carbohydrate metabolism; L-rhamnose metabolism. In terms of biological role, involved in the anomeric conversion of L-rhamnose. The chain is L-rhamnose mutarotase from Lactiplantibacillus plantarum (strain ATCC BAA-793 / NCIMB 8826 / WCFS1) (Lactobacillus plantarum).